The sequence spans 265 residues: Indole-3-glycerol phosphate synthase (265 aa).

It belongs to the TrpC family.

The enzyme catalyses 1-(2-carboxyphenylamino)-1-deoxy-D-ribulose 5-phosphate + H(+) = (1S,2R)-1-C-(indol-3-yl)glycerol 3-phosphate + CO2 + H2O. Its pathway is amino-acid biosynthesis; L-tryptophan biosynthesis; L-tryptophan from chorismate: step 4/5. The protein is Indole-3-glycerol phosphate synthase of Xanthomonas axonopodis pv. citri (strain 306).